Here is a 201-residue protein sequence, read N- to C-terminus: MTLVIGLTGGIASGKSTVAQMFQQCGITVVDADVIAKEAVEQGMPAYQKIAETFGEGVLLETGDIDRRKLGEIVFANEEKRLQLNAIVHPEVRKMMIKQRDEAIRAGERFVVLDIPLLYESGLEHLTDKVIVVWVPMELQLERLMKRNRLNKDEALNRIHAQQSLDEKKKRADAVIDNSGSLKDTEAQLHQLLDTWSNIEK.

The DPCK domain occupies 4 to 201; sequence VIGLTGGIAS…LLDTWSNIEK (198 aa). 12 to 17 serves as a coordination point for ATP; sequence ASGKST.

The protein belongs to the CoaE family.

The protein localises to the cytoplasm. It catalyses the reaction 3'-dephospho-CoA + ATP = ADP + CoA + H(+). It participates in cofactor biosynthesis; coenzyme A biosynthesis; CoA from (R)-pantothenate: step 5/5. Its function is as follows. Catalyzes the phosphorylation of the 3'-hydroxyl group of dephosphocoenzyme A to form coenzyme A. The sequence is that of Dephospho-CoA kinase from Bacillus licheniformis (strain ATCC 14580 / DSM 13 / JCM 2505 / CCUG 7422 / NBRC 12200 / NCIMB 9375 / NCTC 10341 / NRRL NRS-1264 / Gibson 46).